We begin with the raw amino-acid sequence, 336 residues long: DNA-directed RNA polymerase subunit alpha (336 aa).

Positions 1–232 (MIQKNWQELI…DQLGVFVNFD (232 aa)) are alpha N-terminal domain (alpha-NTD). The interval 248–336 (FNPALLKKVD…DLAKRYEDQY (89 aa)) is alpha C-terminal domain (alpha-CTD).

Belongs to the RNA polymerase alpha chain family. In terms of assembly, homodimer. The RNAP catalytic core consists of 2 alpha, 1 beta, 1 beta' and 1 omega subunit. When a sigma factor is associated with the core the holoenzyme is formed, which can initiate transcription.

It carries out the reaction RNA(n) + a ribonucleoside 5'-triphosphate = RNA(n+1) + diphosphate. Its function is as follows. DNA-dependent RNA polymerase catalyzes the transcription of DNA into RNA using the four ribonucleoside triphosphates as substrates. This is DNA-directed RNA polymerase subunit alpha from Rhizobium rhizogenes (strain K84 / ATCC BAA-868) (Agrobacterium radiobacter).